Reading from the N-terminus, the 302-residue chain is Enoyl-CoA delta isomerase 1, mitochondrial (302 aa).

A mitochondrion-targeting transit peptide spans 1-41 (MALVASVRVPARVLLRAGARLPGAALGRTERAAGGGDGARR). N6-acetyllysine; alternate is present on K61. K61 is modified (N6-succinyllysine; alternate). An N6-succinyllysine modification is found at K84. K89 is subject to N6-acetyllysine. Substrate-binding positions include 106–110 (AGLDL), G153, and N177. Residue K283 is modified to N6-acetyllysine; alternate. K283 carries the post-translational modification N6-succinyllysine; alternate. K288 is modified (N6-succinyllysine).

It belongs to the enoyl-CoA hydratase/isomerase family. Homotrimer. As to expression, expressed in liver (at protein level).

Its subcellular location is the mitochondrion matrix. It carries out the reaction a (3Z)-enoyl-CoA = a 4-saturated (2E)-enoyl-CoA. The enzyme catalyses a (3E)-enoyl-CoA = a 4-saturated (2E)-enoyl-CoA. The catalysed reaction is (3Z)-octenoyl-CoA = (2E)-octenoyl-CoA. It catalyses the reaction (2E)-tetradecenoyl-CoA = (3Z)-tetradecenoyl-CoA. It carries out the reaction (3Z)-dodecenoyl-CoA = (2E)-dodecenoyl-CoA. The enzyme catalyses (3Z)-hexenoyl-CoA = (2E)-hexenoyl-CoA. The catalysed reaction is (3Z)-decenoyl-CoA = (2E)-decenoyl-CoA. It functions in the pathway lipid metabolism; fatty acid beta-oxidation. In terms of biological role, key enzyme of fatty acid beta-oxidation. Able to isomerize both 3-cis (3Z) and 3-trans (3E) double bonds into the 2-trans (2E) form in a range of enoyl-CoA species, with a preference for (3Z)-enoyl-CoAs over (3E)-enoyl-CoAs. The catalytic efficiency of this enzyme is not affected by the fatty acyl chain length. This Homo sapiens (Human) protein is Enoyl-CoA delta isomerase 1, mitochondrial (ECI1).